A 219-amino-acid chain; its full sequence is Proteasome subunit beta type-9 (219 aa).

Positions 1 to 20 (MLRAGAPTGDLPRAGEVHTG) are cleaved as a propeptide — removed in mature form. Residue T21 is the Nucleophile of the active site. An N6-acetyllysine mark is found at K53 and K109.

Belongs to the peptidase T1B family. The 26S proteasome consists of a 20S proteasome core and two 19S regulatory subunits. The 20S proteasome core is composed of 28 subunits that are arranged in four stacked rings, resulting in a barrel-shaped structure. The two end rings are each formed by seven alpha subunits, and the two central rings are each formed by seven beta subunits. The catalytic chamber with the active sites is on the inside of the barrel. Component of the immunoproteasome, where it displaces the equivalent housekeeping subunit PSMB6. Component of the spermatoproteasome, a form of the proteasome specifically found in testis. In terms of assembly, (Microbial infection) Interacts with HIV-1 TAT protein. Autocleaved. The resulting N-terminal Thr residue of the mature subunit is responsible for the nucleophile proteolytic activity.

It localises to the cytoplasm. It is found in the nucleus. It carries out the reaction Cleavage of peptide bonds with very broad specificity.. Functionally, the proteasome is a multicatalytic proteinase complex which is characterized by its ability to cleave peptides with Arg, Phe, Tyr, Leu, and Glu adjacent to the leaving group at neutral or slightly basic pH. The proteasome has an ATP-dependent proteolytic activity. This subunit is involved in antigen processing to generate class I binding peptides. Replacement of PSMB6 by PSMB9 increases the capacity of the immunoproteasome to cleave model peptides after hydrophobic and basic residues. The protein is Proteasome subunit beta type-9 (PSMB9) of Homo sapiens (Human).